An 847-amino-acid chain; its full sequence is uncharacterized protein (847 aa).

This is an uncharacterized protein from Penicillium chrysogenum virus (isolate Caston/2003) (PcV).